The sequence spans 370 residues: Proto-oncogene Wnt-1 (370 aa).

Positions 1–27 are cleaved as a signal peptide; it reads MGLWALLPSWVSTTLLLALTALPAALA. N-linked (GlcNAc...) asparagine glycosylation occurs at Asn-29. Cystine bridges form between Cys-93–Cys-104, Cys-143–Cys-151, Cys-153–Cys-170, Cys-218–Cys-232, Cys-220–Cys-227, Cys-299–Cys-330, Cys-315–Cys-325, Cys-329–Cys-369, Cys-345–Cys-360, Cys-347–Cys-357, and Cys-352–Cys-353. The O-palmitoleoyl serine; by PORCN moiety is linked to residue Ser-224. N-linked (GlcNAc...) asparagine glycans are attached at residues Asn-316 and Asn-346. Asn-359 is a glycosylation site (N-linked (GlcNAc...) asparagine).

Belongs to the Wnt family. As to quaternary structure, forms a soluble 1:1 complex with AFM; this prevents oligomerization and is required for prolonged biological activity. The complex with AFM may represent the physiological form in body fluids. Interacts with PORCN. Interacts with RSPO1, RSPO2 and RSPO3. Interacts with WLS. Palmitoleoylation is required for efficient binding to frizzled receptors. Palmitoleoylation is necessary for proper trafficking to cell surface. Depalmitoleoylated by NOTUM, leading to inhibit Wnt signaling pathway. In terms of tissue distribution, testis and mid-gestational embryos. In the testis, detected only in postmeiotic germ cells undergoing differentiation from round spermatids into mature spermatozoa. In the embryos, expression is restricted to the developing CNS in regions of the neural tube other than the telencephalon. Expressed in osteoblast; expression levels increase with advancing osteoblast differentiation. Expressed in the brain, femur, spleen, and hematopoietic bone marrow.

The protein localises to the secreted. The protein resides in the extracellular space. It is found in the extracellular matrix. In terms of biological role, ligand for members of the frizzled family of seven transmembrane receptors. Acts in the canonical Wnt signaling pathway by promoting beta-catenin-dependent transcriptional activation. In some developmental processes, is also a ligand for the coreceptor RYK, thus triggering Wnt signaling. Plays an essential role in the development of the embryonic brain and central nervous system (CNS). Has a role in osteoblast function, bone development and bone homeostasis. The protein is Proto-oncogene Wnt-1 (Wnt1) of Mus musculus (Mouse).